Here is a 180-residue protein sequence, read N- to C-terminus: NAD(P)H-quinone oxidoreductase subunit I, chloroplastic (180 aa).

4Fe-4S ferredoxin-type domains are found at residues 55–84 and 95–124; these read GRIH…VDWR and LNYS…MTEE. Residues cysteine 64, cysteine 67, cysteine 70, cysteine 74, cysteine 104, cysteine 107, cysteine 110, and cysteine 114 each coordinate [4Fe-4S] cluster.

Belongs to the complex I 23 kDa subunit family. In terms of assembly, NDH is composed of at least 16 different subunits, 5 of which are encoded in the nucleus. [4Fe-4S] cluster serves as cofactor.

It localises to the plastid. The protein localises to the chloroplast thylakoid membrane. The enzyme catalyses a plastoquinone + NADH + (n+1) H(+)(in) = a plastoquinol + NAD(+) + n H(+)(out). It catalyses the reaction a plastoquinone + NADPH + (n+1) H(+)(in) = a plastoquinol + NADP(+) + n H(+)(out). Functionally, NDH shuttles electrons from NAD(P)H:plastoquinone, via FMN and iron-sulfur (Fe-S) centers, to quinones in the photosynthetic chain and possibly in a chloroplast respiratory chain. The immediate electron acceptor for the enzyme in this species is believed to be plastoquinone. Couples the redox reaction to proton translocation, and thus conserves the redox energy in a proton gradient. This Liriodendron tulipifera (Tuliptree) protein is NAD(P)H-quinone oxidoreductase subunit I, chloroplastic.